The chain runs to 397 residues: Na(+)/H(+) antiporter NhaA (397 aa).

12 consecutive transmembrane segments (helical) span residues 14-34, 36-56, 59-79, 95-115, 125-145, 154-174, 177-197, 204-224, 254-274, 292-312, 328-348, and 365-385; these read ASGI…NTPL, DLYF…FSIY, LLMW…GLEV, IFPA…FTLI, GWAI…GLLG, IFLL…IAIF, HELS…LIIM, AICA…KSGV, LLAP…NAGV, VALG…FLAV, IFAV…LAGL, and LGIL…LKLC.

This sequence belongs to the NhaA Na(+)/H(+) (TC 2.A.33) antiporter family.

It localises to the cell inner membrane. The enzyme catalyses Na(+)(in) + 2 H(+)(out) = Na(+)(out) + 2 H(+)(in). In terms of biological role, na(+)/H(+) antiporter that extrudes sodium in exchange for external protons. The polypeptide is Na(+)/H(+) antiporter NhaA (Glaesserella parasuis serovar 5 (strain SH0165) (Haemophilus parasuis)).